The following is a 453-amino-acid chain: tRNA modification GTPase MnmE (453 aa).

(6S)-5-formyl-5,6,7,8-tetrahydrofolate contacts are provided by Arg22, Glu79, and Lys119. A TrmE-type G domain is found at 215–376; sequence GMKVVIAGRP…LKQHLKSLMG (162 aa). K(+) is bound at residue Asn225. GTP is bound by residues 225-230, 244-250, 269-272, and 334-337; these read NAGKSS, TEIAGTT, DTAG, and NKAD. Residue Ser229 coordinates Mg(2+). Residues Thr244, Ile246, and Thr249 each coordinate K(+). Mg(2+) is bound at residue Thr250. Lys453 contacts (6S)-5-formyl-5,6,7,8-tetrahydrofolate.

Belongs to the TRAFAC class TrmE-Era-EngA-EngB-Septin-like GTPase superfamily. TrmE GTPase family. As to quaternary structure, homodimer. Heterotetramer of two MnmE and two MnmG subunits. K(+) is required as a cofactor.

It is found in the cytoplasm. Exhibits a very high intrinsic GTPase hydrolysis rate. Involved in the addition of a carboxymethylaminomethyl (cmnm) group at the wobble position (U34) of certain tRNAs, forming tRNA-cmnm(5)s(2)U34. In Shewanella frigidimarina (strain NCIMB 400), this protein is tRNA modification GTPase MnmE.